We begin with the raw amino-acid sequence, 1083 residues long: Probable arabinosyltransferase B (1083 aa).

Transmembrane regions (helical) follow at residues V23 to L45, F222 to W239, L252 to W274, S331 to S350, L357 to W379, T421 to G443, A456 to F478, F525 to L542, A555 to A572, W576 to V598, A611 to V633, D648 to L670, and F690 to G712.

It belongs to the emb family.

It localises to the cell membrane. Its function is as follows. Arabinosyl transferase responsible for the polymerization of arabinose into the arabinan of arabinogalactan. This is Probable arabinosyltransferase B (embB) from Mycobacterium leprae (strain TN).